We begin with the raw amino-acid sequence, 266 residues long: Energy-coupling factor transporter transmembrane protein EcfT 1 (266 aa).

The next 5 helical transmembrane spans lie at 33–53 (IGIL…LFTL), 73–93 (LIWL…GGTI), 107–127 (LLNG…STVI), 152–172 (VPVN…PTLM), and 243–263 (HFGD…LVIL).

The protein belongs to the energy-coupling factor EcfT family. In terms of assembly, forms a stable energy-coupling factor (ECF) transporter complex composed of 2 membrane-embedded substrate-binding proteins (S component), 2 ATP-binding proteins (A component) and 2 transmembrane proteins (T component). May be able to interact with more than 1 S component at a time.

The protein localises to the cell membrane. Its function is as follows. Transmembrane (T) component of an energy-coupling factor (ECF) ABC-transporter complex. Unlike classic ABC transporters this ECF transporter provides the energy necessary to transport a number of different substrates. The chain is Energy-coupling factor transporter transmembrane protein EcfT 1 from Listeria monocytogenes serotype 1/2a (strain 08-5578).